We begin with the raw amino-acid sequence, 301 residues long: GTPase Era (301 aa).

One can recognise an Era-type G domain in the interval 11-180; it reads RSGIITLVGR…KDVFFENCLN (170 aa). A G1 region spans residues 19–26; that stretch reads GRPNVGKS. 19 to 26 lines the GTP pocket; the sequence is GRPNVGKS. The G2 stretch occupies residues 45 to 49; the sequence is QTTRR. A G3 region spans residues 66 to 69; it reads DTPG. GTP is bound by residues 66 to 70 and 129 to 132; these read DTPGI and TKID. The interval 129 to 132 is G4; sequence TKID. A G5 region spans residues 159–161; that stretch reads VSA. The 77-residue stretch at 210–286 folds into the KH type-2 domain; that stretch reads LEQEIPHSLL…YLRLIVKVVK (77 aa).

It belongs to the TRAFAC class TrmE-Era-EngA-EngB-Septin-like GTPase superfamily. Era GTPase family. As to quaternary structure, monomer.

The protein localises to the cytoplasm. Its subcellular location is the cell membrane. In terms of biological role, an essential GTPase that binds both GDP and GTP, with rapid nucleotide exchange. Plays a role in 16S rRNA processing and 30S ribosomal subunit biogenesis and possibly also in cell cycle regulation and energy metabolism. This chain is GTPase Era, found in Tropheryma whipplei (strain TW08/27) (Whipple's bacillus).